Reading from the N-terminus, the 372-residue chain is Bifunctional enzyme IspD/IspF (372 aa).

Positions 1–210 (MLDLSLIMLG…LNLNSPSNDI (210 aa)) are 2-C-methyl-D-erythritol 4-phosphate cytidylyltransferase. The tract at residues 211–372 (FCGNGFDVHA…LKYFNWRNVL (162 aa)) is 2-C-methyl-D-erythritol 2,4-cyclodiphosphate synthase. Residues aspartate 217 and histidine 219 each contribute to the a divalent metal cation site. Residues 217-219 (DVH) and 243-244 (HS) each bind 4-CDP-2-C-methyl-D-erythritol 2-phosphate. Histidine 251 provides a ligand contact to a divalent metal cation. 4-CDP-2-C-methyl-D-erythritol 2-phosphate-binding positions include 265 to 267 (DIG), 270 to 274 (YPDND), 341 to 344 (TTTE), phenylalanine 348, and arginine 351.

It in the N-terminal section; belongs to the IspD/TarI cytidylyltransferase family. IspD subfamily. The protein in the C-terminal section; belongs to the IspF family. A divalent metal cation serves as cofactor.

The catalysed reaction is 2-C-methyl-D-erythritol 4-phosphate + CTP + H(+) = 4-CDP-2-C-methyl-D-erythritol + diphosphate. It catalyses the reaction 4-CDP-2-C-methyl-D-erythritol 2-phosphate = 2-C-methyl-D-erythritol 2,4-cyclic diphosphate + CMP. It functions in the pathway isoprenoid biosynthesis; isopentenyl diphosphate biosynthesis via DXP pathway; isopentenyl diphosphate from 1-deoxy-D-xylulose 5-phosphate: step 2/6. Its pathway is isoprenoid biosynthesis; isopentenyl diphosphate biosynthesis via DXP pathway; isopentenyl diphosphate from 1-deoxy-D-xylulose 5-phosphate: step 4/6. Its function is as follows. Bifunctional enzyme that catalyzes the formation of 4-diphosphocytidyl-2-C-methyl-D-erythritol from CTP and 2-C-methyl-D-erythritol 4-phosphate (MEP) (IspD), and catalyzes the conversion of 4-diphosphocytidyl-2-C-methyl-D-erythritol 2-phosphate (CDP-ME2P) to 2-C-methyl-D-erythritol 2,4-cyclodiphosphate (ME-CPP) with a corresponding release of cytidine 5-monophosphate (CMP) (IspF). This Campylobacter fetus subsp. fetus (strain 82-40) protein is Bifunctional enzyme IspD/IspF.